Reading from the N-terminus, the 98-residue chain is uncharacterized protein (98 aa).

It belongs to the CFAP97 family. As to expression, expressed in a number of tissues including brain, thymus, lung, heart, liver, spleen, kidney and testis.

This is an uncharacterized protein from Mus musculus (Mouse).